A 652-amino-acid polypeptide reads, in one-letter code: Acetyl-coenzyme A synthetase (652 aa).

CoA is bound by residues 193-196 and Thr312; that span reads RRGK. ATP-binding positions include 388–390, 412–417, Asp501, and Arg516; these read GEP and DTWWQT. Ser524 serves as a coordination point for CoA. Residues Val538, His540, and Val543 each coordinate Mg(2+). Lys611 carries the post-translational modification N6-acetyllysine.

The protein belongs to the ATP-dependent AMP-binding enzyme family. The cofactor is Mg(2+). Post-translationally, acetylated. Deacetylation by the SIR2-homolog deacetylase activates the enzyme.

It carries out the reaction acetate + ATP + CoA = acetyl-CoA + AMP + diphosphate. Functionally, catalyzes the conversion of acetate into acetyl-CoA (AcCoA), an essential intermediate at the junction of anabolic and catabolic pathways. AcsA undergoes a two-step reaction. In the first half reaction, AcsA combines acetate with ATP to form acetyl-adenylate (AcAMP) intermediate. In the second half reaction, it can then transfer the acetyl group from AcAMP to the sulfhydryl group of CoA, forming the product AcCoA. This chain is Acetyl-coenzyme A synthetase, found in Streptomyces avermitilis (strain ATCC 31267 / DSM 46492 / JCM 5070 / NBRC 14893 / NCIMB 12804 / NRRL 8165 / MA-4680).